A 330-amino-acid chain; its full sequence is Probable cytosolic iron-sulfur protein assembly protein 1 (330 aa).

WD repeat units lie at residues 12-49 (LYKE…FTLI), 56-95 (AHKK…DRTF), 105-144 (GHEN…EEYE), 151-190 (EHSQ…WECV), 195-236 (GHEG…EDDQ), 248-286 (VHKR…WKVF), and 292-330 (CHGV…EKAA).

This sequence belongs to the WD repeat CIA1 family. Interacts with NAR1.

The protein resides in the cytoplasm. Its subcellular location is the nucleus. In terms of biological role, essential component of the cytosolic iron-sulfur (Fe/S) protein assembly machinery. Required for the maturation of extramitochondrial Fe/S proteins. This chain is Probable cytosolic iron-sulfur protein assembly protein 1, found in Saccharomyces cerevisiae (strain YJM789) (Baker's yeast).